A 209-amino-acid chain; its full sequence is Ubiquitin-conjugating enzyme E2 S (209 aa).

Residues Gln-14–Gln-160 form the UBC core domain. Cys-98 (glycyl thioester intermediate) is an active-site residue. The disordered stretch occupies residues Ala-168–Lys-194. Over residues Ala-184 to Lys-194 the composition is skewed to basic and acidic residues.

Belongs to the ubiquitin-conjugating enzyme family.

It catalyses the reaction S-ubiquitinyl-[E1 ubiquitin-activating enzyme]-L-cysteine + [E2 ubiquitin-conjugating enzyme]-L-cysteine = [E1 ubiquitin-activating enzyme]-L-cysteine + S-ubiquitinyl-[E2 ubiquitin-conjugating enzyme]-L-cysteine.. It participates in protein modification; protein ubiquitination. Functionally, catalyzes the covalent attachment of ubiquitin to other proteins. Acts as an essential factor of the anaphase promoting complex/cyclosome (APC/C), a cell cycle-regulated ubiquitin ligase that controls progression through mitosis. Acts by specifically elongating polyubiquitin chains initiated by the E2 enzyme vih/UbcH10 on APC/C substrates, enhancing the degradation of APC/C substrates by the proteasome and promoting mitotic exit. The protein is Ubiquitin-conjugating enzyme E2 S of Drosophila melanogaster (Fruit fly).